Here is a 123-residue protein sequence, read N- to C-terminus: MIQPQTLLNVADNSGARKLMCIRVIGAAGNQRYARIGDVIVAVIKDALPQMPLERSEVIRAVIVRTCKEFKCEDGIIIRYDDNAAVIIDQKGNPKGTRVFGAIAEELRGLNFTKIVSLAPEVL.

The protein belongs to the universal ribosomal protein uL14 family. In terms of assembly, part of the 50S ribosomal subunit.

It localises to the plastid. The protein resides in the chloroplast. Its function is as follows. Binds to 23S rRNA. The chain is Large ribosomal subunit protein uL14c from Triticum aestivum (Wheat).